A 316-amino-acid chain; its full sequence is Mitochondrial GTPase 1 (316 aa).

A CP-type G domain is found at Met28–Pro203. Residues Asn73 to Asp76, Asn147 to Ser152, and Gly199 each bind GTP.

This sequence belongs to the TRAFAC class YlqF/YawG GTPase family. MTG1 subfamily.

Its subcellular location is the mitochondrion inner membrane. In terms of biological role, plays a role in the regulation of the mitochondrial ribosome assembly and of translational activity. Displays mitochondrial GTPase activity. The polypeptide is Mitochondrial GTPase 1 (Aedes aegypti (Yellowfever mosquito)).